Reading from the N-terminus, the 484-residue chain is Probable endopeptidase p60 (484 aa).

The signal sequence occupies residues 1–27 (MNMKKATIAATAGIAVTAFAAPTIASA). Positions 28–71 (STVVVEAGDTLWGIAQSKGTTVDAIKKANNLTTDKIVPGQKLQV) constitute a LysM 1 domain. The region spanning 80–144 (KTEKSVSATW…VNGKYLTDKA (65 aa)) is the SH3b domain. The tract at residues 150-192 (APTQEVKKETTTQQAAPAAETKTEVKQTTQATTPAPKVAETKE) is disordered. Over residues 160–169 (TTQQAAPAAE) the composition is skewed to low complexity. The LysM 2 domain occupies 201 to 244 (TTHAVKSGDTIWALSVKYGVSVQDIMSWNNLSSSSIYVGQKLAI). The segment at 254-367 (KAEVKTEAPA…QGSSNNNSNS (114 aa)) is disordered. Composition is skewed to low complexity over residues 273 to 282 (KENTNTNTAT) and 289 to 367 (ATQQ…NSNS). The 19 X 2 AA tandem repeats of T-N stretch occupies residues 311 to 355 (TNTNANKTNTNTNTNTNTNNTNTNTPSKNTNTNSNTNTNTNSNTN). The NlpC/P60 domain occupies 366 to 484 (NSSASAIIAE…GKYLVGFGRV (119 aa)). The Nucleophile role is filled by Cys396. Catalysis depends on His446, which acts as the Proton acceptor. The active site involves Asn458.

Belongs to the peptidase C40 family.

It is found in the cell surface. It localises to the secreted. In terms of biological role, this major extracellular protein may be involved in the invasion of non-professional phagocytic cells by Listeria. The polypeptide is Probable endopeptidase p60 (iap) (Listeria monocytogenes serovar 1/2a (strain ATCC BAA-679 / EGD-e)).